A 260-amino-acid polypeptide reads, in one-letter code: Ribosomal RNA small subunit methyltransferase G (260 aa).

S-adenosyl-L-methionine-binding positions include glycine 94, phenylalanine 99, 117-119 (DSS), 145-146 (AE), and arginine 164.

Belongs to the methyltransferase superfamily. RNA methyltransferase RsmG family.

The protein localises to the cytoplasm. In terms of biological role, specifically methylates the N7 position of a guanine in 16S rRNA. This Synechococcus sp. (strain JA-3-3Ab) (Cyanobacteria bacterium Yellowstone A-Prime) protein is Ribosomal RNA small subunit methyltransferase G.